Consider the following 88-residue polypeptide: Protein WIR1A (88 aa).

At 1-13 (MASLGSSAGGRRP) the chain is on the cytoplasmic side. Residues 14–35 (TVLLQIALFVVVAAIIINSSVC) traverse the membrane as a helical segment. The Extracellular segment spans residues 36–88 (LGATAVHDAAASGTGALDPNVPAVPTPGGAGQPYTGRGCRTVYGCRPPAGGQP).

It is found in the membrane. Associated with pathogen defense. This Triticum aestivum (Wheat) protein is Protein WIR1A (WIR1A).